The primary structure comprises 193 residues: Nucleoside triphosphate pyrophosphatase (193 aa).

The active-site Proton acceptor is the Asp-70.

It belongs to the Maf family. A divalent metal cation is required as a cofactor.

The protein localises to the cytoplasm. It carries out the reaction a ribonucleoside 5'-triphosphate + H2O = a ribonucleoside 5'-phosphate + diphosphate + H(+). The enzyme catalyses a 2'-deoxyribonucleoside 5'-triphosphate + H2O = a 2'-deoxyribonucleoside 5'-phosphate + diphosphate + H(+). In terms of biological role, nucleoside triphosphate pyrophosphatase. May have a dual role in cell division arrest and in preventing the incorporation of modified nucleotides into cellular nucleic acids. The polypeptide is Nucleoside triphosphate pyrophosphatase (Anaplasma phagocytophilum (strain HZ)).